The sequence spans 449 residues: Gamma-aminobutyric acid receptor subunit delta (449 aa).

A signal peptide spans 1 to 24 (MDVLGWLLLPLLLLCTQPHHGARA). The Extracellular portion of the chain corresponds to 25 to 251 (MNDIGDYVGS…QLRRNRGVYI (227 aa)). Residues Asn-103 and Asn-106 are each glycosylated (N-linked (GlcNAc...) asparagine). Cys-164 and Cys-178 are oxidised to a cystine. Residues 252–271 (IQSYMPSVLLVAMSWVSFWI) form a helical membrane-spanning segment. The Cytoplasmic segment spans residues 272-275 (SQAA). A helical membrane pass occupies residues 276–298 (VPARVSLGITTVLTMTTLMVSAR). Residues 299 to 308 (SSLPRASAIK) lie on the Extracellular side of the membrane. The chain crosses the membrane as a helical span at residues 309-331 (ALDVYFWICYVFVFAALVEYAFA). At 332 to 423 (HFNADYRKKR…SRLKPIDADT (92 aa)) the chain is on the cytoplasmic side. Phosphoserine is present on Ser-390. A helical transmembrane segment spans residues 424 to 446 (IDIYARAVFPAAFAAVNIIYWAA). Topologically, residues 447-449 (YTM) are extracellular.

The protein belongs to the ligand-gated ion channel (TC 1.A.9) family. Gamma-aminobutyric acid receptor (TC 1.A.9.5) subfamily. GABRD sub-subfamily. Heteropentamer, formed by a combination of alpha (GABRA1-6), beta (GABRB1-3), gamma (GABRG1-3), delta (GABRD), epsilon (GABRE), rho (GABRR1-3), pi (GABRP) and theta (GABRQ) chains, each subunit exhibiting distinct physiological and pharmacological properties. As to expression, found in the brain, in cerebellar granule cells. Expressed in lungs, in alveolar epithelium.

Its subcellular location is the cell membrane. The enzyme catalyses chloride(in) = chloride(out). In terms of biological role, delta subunit of the heteropentameric ligand-gated chloride channel gated by gamma-aminobutyric acid (GABA), a major inhibitory neurotransmitter in the brain. GABA-gated chloride channels, also named GABA(A) receptors (GABAAR), consist of five subunits arranged around a central pore and contain GABA active binding site(s) located at the alpha and beta subunit interface(s). When activated by GABA, GABAARs selectively allow the flow of chloride anions across the cell membrane down their electrochemical gradient. GABAARs containing delta/GABRD subunits are predominantly expressed and located in extrasynaptic or perisynaptic positions on hippocampus and cerebellar granule cells, and contribute to the tonic GABAergic inhibition. GABAAR containing alpha-4-beta-3-delta subunits can simultaneously bind GABA and histamine where histamine binds at the interface of two neighboring beta subunits, which may be involved in the regulation of sleep and wakefulness. This chain is Gamma-aminobutyric acid receptor subunit delta, found in Rattus norvegicus (Rat).